The sequence spans 324 residues: Phosphomevalonate decarboxylase (324 aa).

The protein belongs to the phosphomevalonate decarboxylase family.

It catalyses the reaction (R)-5-phosphomevalonate + ATP = isopentenyl phosphate + ADP + phosphate + CO2. With respect to regulation, is strongly inhibited by 6-fluoromevalonate monophosphate but shows negligible inhibition by 6-fluoromevalonate diphosphate (a potent inhibitor of the classical mevalonate pathway). Functionally, catalyzes the decarboxylation of mevalonate 5-phosphate (MVAP) to isopentenyl phosphate (IP). Functions in an alternate mevalonate (MVA) pathway leading to isopentenyl diphosphate (IPP), a key precursor for the biosynthesis of isoprenoid compounds such as archaeal membrane lipids. The sequence is that of Phosphomevalonate decarboxylase (mvaD) from Haloferax volcanii (strain ATCC 29605 / DSM 3757 / JCM 8879 / NBRC 14742 / NCIMB 2012 / VKM B-1768 / DS2) (Halobacterium volcanii).